The chain runs to 85 residues: Alpha-conotoxin Lt28.1 (85 aa).

An N-terminal signal peptide occupies residues 1 to 21; sequence MPKLEMMLLVLLILPLCYIDA. Residues 22–40 constitute a propeptide that is removed on maturation; sequence VGPPPPWNMEDEIIEHWQK. 4 disulfides stabilise this stretch: Cys-61-Cys-74, Cys-66-Cys-84, Cys-67-Cys-79, and Cys-72-Cys-81.

It belongs to the conotoxin D superfamily. Expressed by the venom duct.

The protein resides in the secreted. Its function is as follows. Alpha-conotoxins act on postsynaptic membranes, they bind to the nicotinic acetylcholine receptors (nAChR) and thus inhibit them. This toxin weakly inhibits alpha-9-alpha-10/CHRNA9-CHRNA10 nAChRs (IC(50)=3 uM). This Conus litteratus (Lettered cone) protein is Alpha-conotoxin Lt28.1.